The sequence spans 127 residues: MSYKPIAPAPSSTPGSSTPGPGTPVPTAGSVPSPSGSVPGAAGPFRPLFNDFGPPSMGYVQAMKPPGAQGSQSTYTDLLSVIEEMGKEIRPTYAGSKSAMERLKRGIIHARALVRECLAETERNART.

Residues 1–49 (MSYKPIAPAPSSTPGSSTPGPGTPVPTAGSVPSPSGSVPGAAGPFRPLF) are disordered. Positions 9 to 44 (APSSTPGSSTPGPGTPVPTAGSVPSPSGSVPGAAGP) are enriched in low complexity. Residues 65-107 (PPGAQGSQSTYTDLLSVIEEMGKEIRPTYAGSKSAMERLKRGI) form an interaction with CDK2 region.

It belongs to the CDK2AP family. As to quaternary structure, component of the nucleosome remodeling and deacetylase (NuRD) repressor complex, composed of core proteins MTA1, MTA2, MTA3, RBBP4, RBBP7, HDAC1, HDAC2, MBD2, MBD3, and peripherally associated proteins CDK2AP1, CDK2AP2, GATAD2A, GATAD2B, CHD3, CHD4 and CHD5. The exact stoichiometry of the NuRD complex is unknown, and some subunits such as MBD2 and MBD3, GATAD2A and GATAD2B, and CHD3, CHD4 and CHD5 define mutually exclusive NuRD complexes. Interacts with CDK2AP1. Interacts with CDK2. Interacts with MAPK1. In terms of processing, phosphorylated by MAPK1 and CDK2.

The protein localises to the cytoplasm. It is found in the nucleus. Functionally, acts as a component of the histone deacetylase NuRD complex which participates in the remodeling of chromatin. Inhibits cell cycle G1/S phase transition by repressing CDK2 expression and activation; represses CDK2 activation by inhibiting its interaction with cyclin E and A. Plays a role in regulating the self-renewal of embryonic stem cells (ESCs) and in maintaining cell survival during terminal differentiation of ESCs. Regulates microtubule organization of metaphase II oocytes. This Bos taurus (Bovine) protein is Cyclin-dependent kinase 2-associated protein 2 (CDK2AP2).